The chain runs to 338 residues: Lipoate-protein ligase A (338 aa).

Residues 29-216 (PATQRVLFLW…AFFAHYGERV (188 aa)) form the BPL/LPL catalytic domain. ATP is bound by residues Arg-71, 76 to 79 (GAVF), and Lys-134. Lys-134 is a (R)-lipoate binding site.

It belongs to the LplA family. Monomer.

It is found in the cytoplasm. The catalysed reaction is L-lysyl-[lipoyl-carrier protein] + (R)-lipoate + ATP = N(6)-[(R)-lipoyl]-L-lysyl-[lipoyl-carrier protein] + AMP + diphosphate + H(+). Its pathway is protein modification; protein lipoylation via exogenous pathway; protein N(6)-(lipoyl)lysine from lipoate: step 1/2. It functions in the pathway protein modification; protein lipoylation via exogenous pathway; protein N(6)-(lipoyl)lysine from lipoate: step 2/2. In terms of biological role, catalyzes both the ATP-dependent activation of exogenously supplied lipoate to lipoyl-AMP and the transfer of the activated lipoyl onto the lipoyl domains of lipoate-dependent enzymes. In Escherichia coli O1:K1 / APEC, this protein is Lipoate-protein ligase A.